A 263-amino-acid chain; its full sequence is 3-methyl-2-oxobutanoate hydroxymethyltransferase (263 aa).

Positions 43 and 82 each coordinate Mg(2+). 3-methyl-2-oxobutanoate-binding positions include Asp43–Ser44, Asp82, and Lys111. Glu113 serves as a coordination point for Mg(2+). Residue Glu179 is the Proton acceptor of the active site.

It belongs to the PanB family. Homodecamer; pentamer of dimers. Mg(2+) is required as a cofactor.

It localises to the cytoplasm. It carries out the reaction 3-methyl-2-oxobutanoate + (6R)-5,10-methylene-5,6,7,8-tetrahydrofolate + H2O = 2-dehydropantoate + (6S)-5,6,7,8-tetrahydrofolate. The protein operates within cofactor biosynthesis; (R)-pantothenate biosynthesis; (R)-pantoate from 3-methyl-2-oxobutanoate: step 1/2. In terms of biological role, catalyzes the reversible reaction in which hydroxymethyl group from 5,10-methylenetetrahydrofolate is transferred onto alpha-ketoisovalerate to form ketopantoate. The protein is 3-methyl-2-oxobutanoate hydroxymethyltransferase of Neisseria meningitidis serogroup A / serotype 4A (strain DSM 15465 / Z2491).